A 173-amino-acid polypeptide reads, in one-letter code: NAD(P)H-quinone oxidoreductase subunit I, chloroplastic (173 aa).

4Fe-4S ferredoxin-type domains lie at 55 to 84 and 95 to 124; these read GRIHFEFDKCIACEVCVRVCPINLPVVDWD and RSYSIDFGVCIFCGNCVEYCPTNCLSMTEE. Residues Cys-64, Cys-67, Cys-70, Cys-74, Cys-104, Cys-107, Cys-110, and Cys-114 each coordinate [4Fe-4S] cluster.

It belongs to the complex I 23 kDa subunit family. As to quaternary structure, NDH is composed of at least 16 different subunits, 5 of which are encoded in the nucleus. [4Fe-4S] cluster is required as a cofactor.

The protein localises to the plastid. It is found in the chloroplast thylakoid membrane. It carries out the reaction a plastoquinone + NADH + (n+1) H(+)(in) = a plastoquinol + NAD(+) + n H(+)(out). The catalysed reaction is a plastoquinone + NADPH + (n+1) H(+)(in) = a plastoquinol + NADP(+) + n H(+)(out). NDH shuttles electrons from NAD(P)H:plastoquinone, via FMN and iron-sulfur (Fe-S) centers, to quinones in the photosynthetic chain and possibly in a chloroplast respiratory chain. The immediate electron acceptor for the enzyme in this species is believed to be plastoquinone. Couples the redox reaction to proton translocation, and thus conserves the redox energy in a proton gradient. The polypeptide is NAD(P)H-quinone oxidoreductase subunit I, chloroplastic (Nephroselmis olivacea (Green alga)).